A 206-amino-acid chain; its full sequence is Thymidylate kinase (206 aa).

7 to 14 is an ATP binding site; it reads GGEGVGKT.

This sequence belongs to the thymidylate kinase family.

It catalyses the reaction dTMP + ATP = dTDP + ADP. In terms of biological role, phosphorylation of dTMP to form dTDP in both de novo and salvage pathways of dTTP synthesis. The chain is Thymidylate kinase from Synechococcus sp. (strain JA-2-3B'a(2-13)) (Cyanobacteria bacterium Yellowstone B-Prime).